The sequence spans 702 residues: Ribosomal RNA large subunit methyltransferase K/L (702 aa).

In terms of domain architecture, THUMP spans 43–154 (LVYQSLMWSR…KETASIALDL (112 aa)).

It belongs to the methyltransferase superfamily. RlmKL family.

The protein resides in the cytoplasm. It catalyses the reaction guanosine(2445) in 23S rRNA + S-adenosyl-L-methionine = N(2)-methylguanosine(2445) in 23S rRNA + S-adenosyl-L-homocysteine + H(+). The enzyme catalyses guanosine(2069) in 23S rRNA + S-adenosyl-L-methionine = N(2)-methylguanosine(2069) in 23S rRNA + S-adenosyl-L-homocysteine + H(+). Specifically methylates the guanine in position 2445 (m2G2445) and the guanine in position 2069 (m7G2069) of 23S rRNA. In Shigella sonnei (strain Ss046), this protein is Ribosomal RNA large subunit methyltransferase K/L.